Consider the following 321-residue polypeptide: Transcriptional activator protein Pur-alpha (321 aa).

Residues 1–54 (MADRDSGSEQGGAALGSGGSLGHPGSGSGSGGGGGGGGGGGGSGGGGGAPGGLQ) are disordered. N-acetylalanine is present on Ala2. Residues 9–51 (EQGGAALGSGGSLGHPGSGSGSGGGGGGGGGGGGSGGGGGAPG) are compositionally biased toward gly residues. Residue Ser181 is modified to Phosphoserine. Residues 294–313 (LHQQQQQQQEETTAATLLLQ) show a composition bias toward low complexity. The interval 294–321 (LHQQQQQQQEETTAATLLLQGEEEGEED) is disordered.

This sequence belongs to the PUR DNA-binding protein family. As to quaternary structure, homodimer, heterodimer with PURB and heterotrimer with PURB and YBX1/Y-box protein 1. Interacts with FMR1; this interaction occurs in association with polyribosome.

The protein resides in the nucleus. Its function is as follows. This is a probable transcription activator that specifically binds the purine-rich single strand of the PUR element located upstream of the c-Myc gene. May play a role in the initiation of DNA replication and in recombination. This is Transcriptional activator protein Pur-alpha (Pura) from Mus musculus (Mouse).